Consider the following 426-residue polypeptide: Adenylosuccinate synthetase (426 aa).

GTP contacts are provided by residues 12 to 18 (GDEGKGK) and 40 to 42 (GHT). Asp13 functions as the Proton acceptor in the catalytic mechanism. Residues Asp13 and Gly40 each coordinate Mg(2+). IMP contacts are provided by residues 13-16 (DEGK), 38-41 (NAGH), Thr131, Arg145, Gln226, Thr241, and Arg305. His41 acts as the Proton donor in catalysis. 301–307 (ATTGRKR) lines the substrate pocket. Residues Arg307, 333 to 335 (KLD), and 415 to 417 (SVG) each bind GTP.

This sequence belongs to the adenylosuccinate synthetase family. In terms of assembly, homodimer. Mg(2+) serves as cofactor.

Its subcellular location is the cytoplasm. It carries out the reaction IMP + L-aspartate + GTP = N(6)-(1,2-dicarboxyethyl)-AMP + GDP + phosphate + 2 H(+). It participates in purine metabolism; AMP biosynthesis via de novo pathway; AMP from IMP: step 1/2. Its function is as follows. Plays an important role in the de novo pathway of purine nucleotide biosynthesis. Catalyzes the first committed step in the biosynthesis of AMP from IMP. The polypeptide is Adenylosuccinate synthetase (Nitratidesulfovibrio vulgaris (strain DP4) (Desulfovibrio vulgaris)).